Here is a 349-residue protein sequence, read N- to C-terminus: Two pore potassium channel b (349 aa).

The segment at 1-53 (MAALDQQPLLHDGGDQKPPPEGAARRFRRCRTAPSSEPPPTDKDNSSAADAPP) is disordered. At 1 to 66 (MAALDQQPLL…FTGGGRPSFR (66 aa)) the chain is on the cytoplasmic side. The chain crosses the membrane as a helical span at residues 67-87 (LVGLLLVAYLLLGTIAFYLAM). Residues 100 to 119 (DALYFCVVTMTTVGYGDLVP) constitute an intramembrane region (pore-forming). A helical transmembrane segment spans residues 123–143 (AAKLLACAFVFAGVAVVGTFL). Over 144–180 (SKAADYLVEKQEALLFRALHSHTMVRAMEMNKVRYKL) the chain is Cytoplasmic. A helical transmembrane segment spans residues 181–201 (YTAGLLLVAAVASGTVVLWKV). The segment at residues 208-227 (DAFYCVCATVTTLGYGDRSF) is an intramembrane region (pore-forming). The helical transmembrane segment at 234 to 254 (AFAVAWITVSTVVVALFFLYA) threads the bilayer. Residues 255–349 (AELYTERRQR…PTPDPPPSLR (95 aa)) are Cytoplasmic-facing. 2 consecutive EF-hand domains span residues 271-306 (LRRR…ELGK) and 310-345 (EDIS…PDPP). Positions 284, 286, 288, 290, 295, 323, 325, 327, 329, and 334 each coordinate Ca(2+). The disordered stretch occupies residues 326–349 (HSGTLSPADLAAAQPTPDPPPSLR).

It belongs to the two pore domain potassium channel (TC 1.A.1.7) family. Homodimer.

The protein resides in the vacuole membrane. Its function is as follows. Highly selective inward-rectifying potassium channel that is specifically located in the tonoplast of protein storage vacuoles. Functions independently of the voltage difference across the membrane. This is Two pore potassium channel b (TPKB) from Oryza sativa subsp. japonica (Rice).